The sequence spans 64 residues: Large ribosomal subunit protein bL28 (64 aa).

Belongs to the bacterial ribosomal protein bL28 family.

The sequence is that of Large ribosomal subunit protein bL28 from Campylobacter jejuni subsp. doylei (strain ATCC BAA-1458 / RM4099 / 269.97).